Consider the following 199-residue polypeptide: Extracellular superoxide dismutase [Cu-Zn] (199 aa).

Positions 1–20 (MMIASFAIFLSHIIFITYAT) are cleaved as a signal peptide. N-linked (GlcNAc...) asparagine glycans are attached at residues N33, N60, and N70. Positions 89, 91, and 106 each coordinate Cu cation. C100 and C192 form a disulfide bridge. H106 lines the Zn(2+) pocket. A glycan (N-linked (GlcNAc...) asparagine) is linked at N111. The Zn(2+) site is built by H114, H123, and D126. Cu cation is bound at residue H163.

This sequence belongs to the Cu-Zn superoxide dismutase family. As to quaternary structure, homodimer. Cu cation is required as a cofactor. Zn(2+) serves as cofactor.

It is found in the secreted. The protein resides in the extracellular space. The enzyme catalyses 2 superoxide + 2 H(+) = H2O2 + O2. In terms of biological role, protect the extracellular space from toxic effect of reactive oxygen intermediates by converting superoxide radicals into hydrogen peroxide and oxygen. May act in the parasite defense by neutralizing superoxide generated by activated leukocytes, thus acting as both an antioxidant and an anti-inflammatory factor. The chain is Extracellular superoxide dismutase [Cu-Zn] from Brugia pahangi (Filarial nematode worm).